Here is a 601-residue protein sequence, read N- to C-terminus: Lanthanide-dependent methanol dehydrogenase (601 aa).

Positions 1 to 21 (MRAVHLLALGAGLAAASPALA) are cleaved as a signal peptide. A disulfide bridge connects residues Cys-124 and Cys-125. Positions 130, 174, 189, 190, and 191 each coordinate pyrroloquinoline quinone. Glu-192 contacts La(3+). Cys-197 and Cys-256 are joined by a disulfide. Trp-258 is a pyrroloquinoline quinone binding site. La(3+) is bound by residues Asn-276, Asp-318, and Asp-320. Residue Asp-318 is the Proton acceptor of the active site. A pyrroloquinoline quinone-binding site is contributed by Arg-345. Cysteines 408 and 437 form a disulfide. The pyrroloquinoline quinone site is built by Trp-494 and Trp-558.

It belongs to the bacterial PQQ dehydrogenase family. In terms of assembly, homodimer. The cofactor is La(3+). Nd(3+) is required as a cofactor. Requires pyrroloquinoline quinone as cofactor.

The protein localises to the periplasm. It carries out the reaction 2 Fe(III)-[cytochrome cL] + methanol = 2 Fe(II)-[cytochrome cL] + formaldehyde + 2 H(+). In terms of biological role, catalyzes the oxidation of methanol to formaldehyde, but only in the presence of lanthanides (Ln). Contributes to methanol metabolism when La(3+) is present in the natural environment of the bacterium, allowing bacterial growth with methanol as carbon and energy source. Thereby is an essential enzyme for Ln-dependent methylotrophy. Uses a specific cytochrome cL (XoxG), encoded by the adjacent gene in the locus, as electron acceptor. Also plays a role in the transcriptional regulation of the mxa and xox1 operons, most likely acting as a lanthanide sensory module. Is also able to oxidize formaldehyde to formate in vitro, but this activity does not occur in vivo. The protein is Lanthanide-dependent methanol dehydrogenase of Methylorubrum extorquens (strain ATCC 14718 / DSM 1338 / JCM 2805 / NCIMB 9133 / AM1) (Methylobacterium extorquens).